Reading from the N-terminus, the 319-residue chain is D-alanine--D-alanine ligase B (319 aa).

Residues 117–312 (KQVWQSLGPA…FQQLVLAILA (196 aa)) form the ATP-grasp domain. Residue 143–198 (ATELGFPLIVKPAHEGSSIGMAKVNSVDELIAAWKAASTYDSQVLVEQWIQGPEFT) participates in ATP binding. Mg(2+)-binding residues include Asp266, Glu279, and Asn281.

This sequence belongs to the D-alanine--D-alanine ligase family. It depends on Mg(2+) as a cofactor. Requires Mn(2+) as cofactor.

It is found in the cytoplasm. It carries out the reaction 2 D-alanine + ATP = D-alanyl-D-alanine + ADP + phosphate + H(+). The protein operates within cell wall biogenesis; peptidoglycan biosynthesis. Cell wall formation. In Pseudomonas syringae pv. tomato (strain ATCC BAA-871 / DC3000), this protein is D-alanine--D-alanine ligase B.